A 130-amino-acid polypeptide reads, in one-letter code: Small ribosomal subunit protein uS9 (130 aa).

Belongs to the universal ribosomal protein uS9 family.

The chain is Small ribosomal subunit protein uS9 from Nitrosospira multiformis (strain ATCC 25196 / NCIMB 11849 / C 71).